Consider the following 94-residue polypeptide: Large ribosomal subunit protein bL25 (94 aa).

This sequence belongs to the bacterial ribosomal protein bL25 family. In terms of assembly, part of the 50S ribosomal subunit; part of the 5S rRNA/L5/L18/L25 subcomplex. Contacts the 5S rRNA. Binds to the 5S rRNA independently of L5 and L18.

Its function is as follows. This is one of the proteins that binds to the 5S RNA in the ribosome where it forms part of the central protuberance. In Proteus mirabilis (strain HI4320), this protein is Large ribosomal subunit protein bL25.